The following is a 257-amino-acid chain: Glycerol-3-phosphate acyltransferase (257 aa).

The next 6 membrane-spanning stretches (helical) occupy residues isoleucine 7–serine 27, isoleucine 66–isoleucine 86, alanine 104–phenylalanine 124, isoleucine 140–isoleucine 160, methionine 164–isoleucine 184, and tyrosine 203–isoleucine 223.

Belongs to the PlsY family. In terms of assembly, probably interacts with PlsX.

It localises to the cell membrane. It catalyses the reaction an acyl phosphate + sn-glycerol 3-phosphate = a 1-acyl-sn-glycero-3-phosphate + phosphate. The protein operates within lipid metabolism; phospholipid metabolism. Its function is as follows. Catalyzes the transfer of an acyl group from acyl-phosphate (acyl-PO(4)) to glycerol-3-phosphate (G3P) to form lysophosphatidic acid (LPA). This enzyme utilizes acyl-phosphate as fatty acyl donor, but not acyl-CoA or acyl-ACP. The sequence is that of Glycerol-3-phosphate acyltransferase from Ureaplasma parvum serovar 3 (strain ATCC 700970).